An 869-amino-acid polypeptide reads, in one-letter code: VSVPPTSYRDRIMNALEESMIDVDAIRGSSARELVEIGKVALLNQPMDEGRIMSWLSDRFPDTQKPKGPIYSKTTIYHGTNKQKRKQRYALVQSLYKKDISAAARVVLDENDKIATKIPPVRHMFDYWKDVFATGGGSAATNINRAPPAPHMETLWDPVSLIEIKSARASNEKGAGPDGVTPRSWNALDDRYKRLLYNIFVFYGRVPSPIKGSRTVFTPKIEGGPDPGVFRPLSICSVILREFNKILARRFVSCYTYDERQTAYLPIDGVCINVSMLTAIIAEAKRLRKELHIAILDLVKAFNSVYHSALIDAITEAGCPPGVVDYIADMYNNVITEMQFEGKCELASILAGVYQGDPLSGPLFTLAYEKALRALNNEGRFDIADVRVNASAYSDDGLLLAMTVIGLQHNLDKFGETLAKIGLRINSRKSKTVSLVPSGREKKMKIVSNRRLLLKASELKPLTISDLWKYLGVVYTTSGPEVAKVSMDDDLSKLTKGPLKPQQRIHLLKTFVIPKHLNRLVLSRTTATGLCKMDLLIRKYVRRWLRLPGDVPVAFLYAPVKAGGKGIPCLKQWIPLMRFLRLNKAKRTGGDRIAAVLNCQLYASISHSCKTGPVSVGLWRSTNTGGLSAYWRRILIGMVDGKDLKSAQNHSSATSFNSIRMNDISGEDYIHYNQLRTNSIPTRKRTARGRPNKPTACRAGCDKLKRLQHDIQGCIRSQGGLVQRHDRVVDLLFDECETKGYAAEKVVHLRTSEELWKPDLVLKKNGRVVVVDAQVVQCGRLESDHRVKVSKYRDDPELADVIREKYAVQEVTFEACTLSYKGIWSKNSVEGLQKLGISNYCLFKIVTSVLRGSWLNWVRFNNVTTVVHW.

A Reverse transcriptase domain is found at 199–475 (IFVFYGRVPS…DLWKYLGVVY (277 aa)). Residues 601-869 (LYASISHSCK…FNNVTTVVHW (269 aa)) are nucleic acid-binding endonuclease.

The catalysed reaction is DNA(n) + a 2'-deoxyribonucleoside 5'-triphosphate = DNA(n+1) + diphosphate. This is Retrovirus-related Pol polyprotein from type-1 retrotransposable element R2 from Bradysia coprophila (Dark-winged fungus gnat).